Reading from the N-terminus, the 108-residue chain is Small ribosomal subunit protein eS25 (108 aa).

A disordered region spans residues 1-36 (MAPKKAQAPPPSSKPAKSGGGKQKKKKWSKGKQKEK). Residues 22–31 (KQKKKKWSKG) are compositionally biased toward basic residues.

It belongs to the eukaryotic ribosomal protein eS25 family.

This chain is Small ribosomal subunit protein eS25 (RPS25), found in Solanum lycopersicum (Tomato).